The following is a 230-amino-acid chain: Probable methylthioribulose-1-phosphate dehydratase (230 aa).

Substrate is bound at residue Cys87. Residues His105 and His107 each contribute to the Zn(2+) site. Glu129 (proton donor/acceptor) is an active-site residue. His185 provides a ligand contact to Zn(2+).

Belongs to the aldolase class II family. MtnB subfamily. Zn(2+) is required as a cofactor.

Its subcellular location is the cytoplasm. The enzyme catalyses 5-(methylsulfanyl)-D-ribulose 1-phosphate = 5-methylsulfanyl-2,3-dioxopentyl phosphate + H2O. Its pathway is amino-acid biosynthesis; L-methionine biosynthesis via salvage pathway; L-methionine from S-methyl-5-thio-alpha-D-ribose 1-phosphate: step 2/6. Its function is as follows. Catalyzes the dehydration of methylthioribulose-1-phosphate (MTRu-1-P) into 2,3-diketo-5-methylthiopentyl-1-phosphate (DK-MTP-1-P). The sequence is that of Probable methylthioribulose-1-phosphate dehydratase from Drosophila grimshawi (Hawaiian fruit fly).